Consider the following 78-residue polypeptide: Large ribosomal subunit protein bL28 (78 aa).

The disordered stretch occupies residues 1-25 (MARVCQVTGKRPMSGHHVSHANNKT). The segment covering 13–25 (MSGHHVSHANNKT) has biased composition (basic residues).

It belongs to the bacterial ribosomal protein bL28 family.

The chain is Large ribosomal subunit protein bL28 from Nitrosomonas eutropha (strain DSM 101675 / C91 / Nm57).